The chain runs to 190 residues: Peptidyl-tRNA hydrolase (190 aa).

Tyrosine 17 contributes to the tRNA binding site. The Proton acceptor role is filled by histidine 22. TRNA contacts are provided by tyrosine 67 and asparagine 69.

The protein belongs to the PTH family. In terms of assembly, monomer.

The protein resides in the cytoplasm. It catalyses the reaction an N-acyl-L-alpha-aminoacyl-tRNA + H2O = an N-acyl-L-amino acid + a tRNA + H(+). In terms of biological role, hydrolyzes ribosome-free peptidyl-tRNAs (with 1 or more amino acids incorporated), which drop off the ribosome during protein synthesis, or as a result of ribosome stalling. Functionally, catalyzes the release of premature peptidyl moieties from peptidyl-tRNA molecules trapped in stalled 50S ribosomal subunits, and thus maintains levels of free tRNAs and 50S ribosomes. The chain is Peptidyl-tRNA hydrolase from Moorella thermoacetica (strain ATCC 39073 / JCM 9320).